The primary structure comprises 322 residues: tRNA pseudouridine synthase B (322 aa).

Residues 1–11 are compositionally biased toward basic and acidic residues; it reads MRPPRTTELDR. Positions 1–22 are disordered; the sequence is MRPPRTTELDRPMTTAASQRPR. The active-site Nucleophile is the Asp-65.

It belongs to the pseudouridine synthase TruB family. Type 1 subfamily.

The enzyme catalyses uridine(55) in tRNA = pseudouridine(55) in tRNA. Its function is as follows. Responsible for synthesis of pseudouridine from uracil-55 in the psi GC loop of transfer RNAs. This chain is tRNA pseudouridine synthase B, found in Burkholderia lata (strain ATCC 17760 / DSM 23089 / LMG 22485 / NCIMB 9086 / R18194 / 383).